The sequence spans 212 residues: Ribonuclease HII (212 aa).

The 199-residue stretch at 1 to 199 folds into the RNase H type-2 domain; that stretch reads MIGGIDEAGR…VGGRIGLGRN (199 aa). A divalent metal cation contacts are provided by Asp-6, Glu-7, and Asp-101.

This sequence belongs to the RNase HII family. The cofactor is Mn(2+). Mg(2+) is required as a cofactor.

The protein resides in the cytoplasm. The catalysed reaction is Endonucleolytic cleavage to 5'-phosphomonoester.. Its function is as follows. Endonuclease that specifically degrades the RNA of RNA-DNA hybrids. The protein is Ribonuclease HII of Pyrobaculum aerophilum (strain ATCC 51768 / DSM 7523 / JCM 9630 / CIP 104966 / NBRC 100827 / IM2).